A 254-amino-acid polypeptide reads, in one-letter code: 3-dehydroquinate dehydratase (254 aa).

3-dehydroquinate contacts are provided by residues 47-49 and R83; that span reads EWR. The active-site Proton donor/acceptor is the H144. K171 serves as the catalytic Schiff-base intermediate with substrate. 3-dehydroquinate-binding residues include R214, S233, and Q237.

This sequence belongs to the type-I 3-dehydroquinase family. In terms of assembly, homodimer.

It carries out the reaction 3-dehydroquinate = 3-dehydroshikimate + H2O. The protein operates within metabolic intermediate biosynthesis; chorismate biosynthesis; chorismate from D-erythrose 4-phosphate and phosphoenolpyruvate: step 3/7. In terms of biological role, involved in the third step of the chorismate pathway, which leads to the biosynthesis of aromatic amino acids. Catalyzes the cis-dehydration of 3-dehydroquinate (DHQ) and introduces the first double bond of the aromatic ring to yield 3-dehydroshikimate. This is 3-dehydroquinate dehydratase from Bacillus licheniformis (strain ATCC 14580 / DSM 13 / JCM 2505 / CCUG 7422 / NBRC 12200 / NCIMB 9375 / NCTC 10341 / NRRL NRS-1264 / Gibson 46).